The primary structure comprises 647 residues: Acetyl-coenzyme A synthetase (647 aa).

CoA is bound by residues R190 to K193, T310, and N334. ATP-binding positions include G386–P388, D410–T415, D499, and R514. S522 is a binding site for CoA. ATP is bound at residue R525. Mg(2+)-binding residues include V536, H538, and V541. R583 is a binding site for CoA. K608 is modified (N6-acetyllysine).

It belongs to the ATP-dependent AMP-binding enzyme family. Requires Mg(2+) as cofactor. In terms of processing, acetylated. Deacetylation by the SIR2-homolog deacetylase activates the enzyme.

The enzyme catalyses acetate + ATP + CoA = acetyl-CoA + AMP + diphosphate. Its function is as follows. Catalyzes the conversion of acetate into acetyl-CoA (AcCoA), an essential intermediate at the junction of anabolic and catabolic pathways. AcsA undergoes a two-step reaction. In the first half reaction, AcsA combines acetate with ATP to form acetyl-adenylate (AcAMP) intermediate. In the second half reaction, it can then transfer the acetyl group from AcAMP to the sulfhydryl group of CoA, forming the product AcCoA. This chain is Acetyl-coenzyme A synthetase, found in Xanthomonas campestris pv. campestris (strain 8004).